We begin with the raw amino-acid sequence, 157 residues long: Crossover junction endodeoxyribonuclease RuvC (157 aa).

Catalysis depends on residues D7, E66, and D139. Positions 7, 66, and 139 each coordinate Mg(2+).

The protein belongs to the RuvC family. In terms of assembly, homodimer which binds Holliday junction (HJ) DNA. The HJ becomes 2-fold symmetrical on binding to RuvC with unstacked arms; it has a different conformation from HJ DNA in complex with RuvA. In the full resolvosome a probable DNA-RuvA(4)-RuvB(12)-RuvC(2) complex forms which resolves the HJ. The cofactor is Mg(2+).

It localises to the cytoplasm. The catalysed reaction is Endonucleolytic cleavage at a junction such as a reciprocal single-stranded crossover between two homologous DNA duplexes (Holliday junction).. In terms of biological role, the RuvA-RuvB-RuvC complex processes Holliday junction (HJ) DNA during genetic recombination and DNA repair. Endonuclease that resolves HJ intermediates. Cleaves cruciform DNA by making single-stranded nicks across the HJ at symmetrical positions within the homologous arms, yielding a 5'-phosphate and a 3'-hydroxyl group; requires a central core of homology in the junction. The consensus cleavage sequence is 5'-(A/T)TT(C/G)-3'. Cleavage occurs on the 3'-side of the TT dinucleotide at the point of strand exchange. HJ branch migration catalyzed by RuvA-RuvB allows RuvC to scan DNA until it finds its consensus sequence, where it cleaves and resolves the cruciform DNA. Its function is as follows. Required for efficient infection in a mouse model system. The protein is Crossover junction endodeoxyribonuclease RuvC of Helicobacter pylori (strain G27).